The following is a 187-amino-acid chain: Probable chorismate pyruvate-lyase (187 aa).

The substrate site is built by arginine 80, leucine 118, and glutamate 170.

It belongs to the UbiC family.

Its subcellular location is the cytoplasm. The catalysed reaction is chorismate = 4-hydroxybenzoate + pyruvate. It participates in cofactor biosynthesis; ubiquinone biosynthesis. In terms of biological role, removes the pyruvyl group from chorismate, with concomitant aromatization of the ring, to provide 4-hydroxybenzoate (4HB) for the ubiquinone pathway. The polypeptide is Probable chorismate pyruvate-lyase (Pseudomonas fluorescens (strain ATCC BAA-477 / NRRL B-23932 / Pf-5)).